The sequence spans 185 residues: Elongation factor P (185 aa).

The protein belongs to the elongation factor P family.

It is found in the cytoplasm. It functions in the pathway protein biosynthesis; polypeptide chain elongation. Functionally, involved in peptide bond synthesis. Stimulates efficient translation and peptide-bond synthesis on native or reconstituted 70S ribosomes in vitro. Probably functions indirectly by altering the affinity of the ribosome for aminoacyl-tRNA, thus increasing their reactivity as acceptors for peptidyl transferase. The protein is Elongation factor P of Clostridium botulinum (strain ATCC 19397 / Type A).